Here is a 643-residue protein sequence, read N- to C-terminus: Chromosomal replication initiator protein DnaA (643 aa).

Residues 1-97 (MADVPADLAA…VDDSAGEPPP (97 aa)) are domain I, interacts with DnaA modulators. The segment at 87–303 (TVDDSAGEPP…ASGPGEPTAR (217 aa)) is disordered. The domain II stretch occupies residues 97–302 (PAAPPAQQTP…PASGPGEPTA (206 aa)). The span at 195 to 209 (SPSSQDAYGSPSQDY) shows a compositional bias: polar residues. Residues 222–269 (QRGDYDTPRAEYEPARPDYDSARPDYESARPEYDQRDPVRRELPEPPA) show a composition bias toward basic and acidic residues. Low complexity predominate over residues 291–300 (PAPASGPGEP). The segment at 303–519 (RLNPKYLFDT…GALIRVTAFA (217 aa)) is domain III, AAA+ region. 4 residues coordinate ATP: Gly347, Gly349, Lys350, and Thr351. The domain IV, binds dsDNA stretch occupies residues 520 to 643 (SLNRQPVDLG…TELTNRIKNG (124 aa)).

This sequence belongs to the DnaA family. Oligomerizes as a right-handed, spiral filament on DNA at oriC.

The protein resides in the cytoplasm. In terms of biological role, plays an essential role in the initiation and regulation of chromosomal replication. ATP-DnaA binds to the origin of replication (oriC) to initiate formation of the DNA replication initiation complex once per cell cycle. Binds the DnaA box (a 9 base pair repeat at the origin) and separates the double-stranded (ds)DNA. Forms a right-handed helical filament on oriC DNA; dsDNA binds to the exterior of the filament while single-stranded (ss)DNA is stabiized in the filament's interior. The ATP-DnaA-oriC complex binds and stabilizes one strand of the AT-rich DNA unwinding element (DUE), permitting loading of DNA polymerase. After initiation quickly degrades to an ADP-DnaA complex that is not apt for DNA replication. Binds acidic phospholipids. This is Chromosomal replication initiator protein DnaA from Streptomyces reticuli.